The primary structure comprises 376 residues: Alanine racemase (376 aa).

K40 functions as the Proton acceptor; specific for D-alanine in the catalytic mechanism. K40 carries the post-translational modification N6-(pyridoxal phosphate)lysine. R138 is a substrate binding site. The active-site Proton acceptor; specific for L-alanine is the Y270. M317 is a substrate binding site.

This sequence belongs to the alanine racemase family. Pyridoxal 5'-phosphate is required as a cofactor.

The catalysed reaction is L-alanine = D-alanine. The protein operates within amino-acid biosynthesis; D-alanine biosynthesis; D-alanine from L-alanine: step 1/1. Catalyzes the interconversion of L-alanine and D-alanine. May also act on other amino acids. This Lactobacillus gasseri (strain ATCC 33323 / DSM 20243 / BCRC 14619 / CIP 102991 / JCM 1131 / KCTC 3163 / NCIMB 11718 / NCTC 13722 / AM63) protein is Alanine racemase (alr).